The sequence spans 542 residues: CTP synthase (542 aa).

Residues 1–265 (MARYVFITGG…DSEVLCAFGI (265 aa)) form an amidoligase domain region. S13 is a CTP binding site. S13 lines the UTP pocket. Residue 14–19 (SLGKGI) participates in ATP binding. Y54 contacts L-glutamine. D71 provides a ligand contact to ATP. Mg(2+)-binding residues include D71 and E139. Residues 146–148 (DIE), 186–191 (KTKPTQ), and K222 each bind CTP. UTP-binding positions include 186-191 (KTKPTQ) and K222. Residues 291–541 (TIAVVGKYTG…IEAAVEQSRL (251 aa)) enclose the Glutamine amidotransferase type-1 domain. A353 serves as a coordination point for L-glutamine. C380 serves as the catalytic Nucleophile; for glutamine hydrolysis. L-glutamine contacts are provided by residues 381–384 (FGMQ), E404, and R469. Active-site residues include H514 and E516.

Belongs to the CTP synthase family. Homotetramer.

The enzyme catalyses UTP + L-glutamine + ATP + H2O = CTP + L-glutamate + ADP + phosphate + 2 H(+). It catalyses the reaction L-glutamine + H2O = L-glutamate + NH4(+). It carries out the reaction UTP + NH4(+) + ATP = CTP + ADP + phosphate + 2 H(+). It functions in the pathway pyrimidine metabolism; CTP biosynthesis via de novo pathway; CTP from UDP: step 2/2. With respect to regulation, allosterically activated by GTP, when glutamine is the substrate; GTP has no effect on the reaction when ammonia is the substrate. The allosteric effector GTP functions by stabilizing the protein conformation that binds the tetrahedral intermediate(s) formed during glutamine hydrolysis. Inhibited by the product CTP, via allosteric rather than competitive inhibition. Catalyzes the ATP-dependent amination of UTP to CTP with either L-glutamine or ammonia as the source of nitrogen. Regulates intracellular CTP levels through interactions with the four ribonucleotide triphosphates. This is CTP synthase from Bartonella tribocorum (strain CIP 105476 / IBS 506).